Reading from the N-terminus, the 93-residue chain is Sec-independent protein translocase protein TatA (93 aa).

A helical transmembrane segment spans residues Met1 to Gly21. The segment at Glu45 to Ser93 is disordered. Residues Glu53 to Arg75 are compositionally biased toward polar residues.

The protein belongs to the TatA/E family. The Tat system comprises two distinct complexes: a TatABC complex, containing multiple copies of TatA, TatB and TatC subunits, and a separate TatA complex, containing only TatA subunits. Substrates initially bind to the TatABC complex, which probably triggers association of the separate TatA complex to form the active translocon.

The protein resides in the cell membrane. In terms of biological role, part of the twin-arginine translocation (Tat) system that transports large folded proteins containing a characteristic twin-arginine motif in their signal peptide across membranes. TatA could form the protein-conducting channel of the Tat system. The sequence is that of Sec-independent protein translocase protein TatA from Mycolicibacterium paratuberculosis (strain ATCC BAA-968 / K-10) (Mycobacterium paratuberculosis).